A 71-amino-acid chain; its full sequence is Beta-defensin 2 (71 aa).

An N-terminal signal peptide occupies residues M1 to P20. 3 disulfide bridges follow: C37–C66, C44–C59, and C49–C67.

Belongs to the beta-defensin family. In terms of tissue distribution, kidney, uterus and to a lesser extent in heart.

The protein localises to the secreted. Functionally, has bactericidal activity. This Mus musculus (Mouse) protein is Beta-defensin 2 (Defb2).